The following is an 804-amino-acid chain: Serine/threonine-protein kinase ATG1 (804 aa).

Positions 12-308 (FTIGPEIGRG…FQEFFNDPLI (297 aa)) constitute a Protein kinase domain. Residues 18 to 26 (IGRGSFANV) and Lys41 contribute to the ATP site. Catalysis depends on Asp158, which acts as the Proton acceptor. 3 disordered regions span residues 339–364 (TSPP…ERAP), 395–415 (INKS…KGAR), and 455–506 (PSPH…MPIS). Basic and acidic residues predominate over residues 404–415 (TVKDGQIKKGAR). Positions 462 to 495 (NEHSAANPSGPTETQTQRRFSPSSRTSSIGSNRR) are enriched in polar residues.

This sequence belongs to the protein kinase superfamily. Ser/Thr protein kinase family. APG1/unc-51/ULK1 subfamily. In terms of assembly, homodimer. Forms a ternary complex with ATG13 and ATG17.

It localises to the cytoplasm. It is found in the preautophagosomal structure membrane. The enzyme catalyses L-seryl-[protein] + ATP = O-phospho-L-seryl-[protein] + ADP + H(+). The catalysed reaction is L-threonyl-[protein] + ATP = O-phospho-L-threonyl-[protein] + ADP + H(+). In terms of biological role, serine/threonine protein kinase involved in the cytoplasm to vacuole transport (Cvt) and found to be essential in autophagy, where it is required for the formation of autophagosomes. Involved in the clearance of protein aggregates which cannot be efficiently cleared by the proteasome. Required for selective autophagic degradation of the nucleus (nucleophagy) as well as for mitophagy which contributes to regulate mitochondrial quantity and quality by eliminating the mitochondria to a basal level to fulfill cellular energy requirements and preventing excess ROS production. Also involved in endoplasmic reticulum-specific autophagic process, in selective removal of ER-associated degradation (ERAD) substrates. Plays a key role in ATG9 and ATG23 cycling through the pre-autophagosomal structure and is necessary to promote ATG18 binding to ATG9 through phosphorylation of ATG9. Catalyzes phosphorylation of ATG4, decreasing the interaction between ATG4 and ATG8 and impairing deconjugation of PE-conjugated forms of ATG8. This chain is Serine/threonine-protein kinase ATG1, found in Pichia angusta (Yeast).